Consider the following 327-residue polypeptide: Cell division protein ZipA (327 aa).

Over 1-5 the chain is Periplasmic; sequence MQDLR. The helical transmembrane segment at 6-26 threads the bilayer; sequence LILIVVGAIAIIALLLHGLWT. The Cytoplasmic segment spans residues 27-327; sequence SRKERSSLFR…REVLDANTIA (301 aa). Residues 60–71 show a composition bias toward basic and acidic residues; sequence GEVRVRTSHPQE. The segment at 60–182 is disordered; that stretch reads GEVRVRTSHP…EPVAPAPEAK (123 aa). Composition is skewed to polar residues over residues 94–103 and 163–173; these read KSAQVKTASR and APQQHVESQQE.

The protein belongs to the ZipA family. Interacts with FtsZ via their C-terminal domains.

It is found in the cell inner membrane. Its function is as follows. Essential cell division protein that stabilizes the FtsZ protofilaments by cross-linking them and that serves as a cytoplasmic membrane anchor for the Z ring. Also required for the recruitment to the septal ring of downstream cell division proteins. This is Cell division protein ZipA from Yersinia pseudotuberculosis serotype O:1b (strain IP 31758).